A 221-amino-acid polypeptide reads, in one-letter code: Response regulator protein PmrA (221 aa).

Residues 2–116 enclose the Response regulatory domain; that stretch reads RILLAEDDLL…ELQARVRALT (115 aa). Aspartate 51 is subject to 4-aspartylphosphate. A DNA-binding region (ompR/PhoB-type) is located at residues 124-218; that stretch reads LPQLVHGELR…VRGIGYGIDQ (95 aa).

Its subcellular location is the cytoplasm. Functionally, member of the two-component regulatory system PmrA/PmrB that plays a role in the regulation of resistance towards polymyxin B and cationic antimicrobial peptides in response to limiting concentrations of Mg(2+). Functions as a transcriptional activator by direct binding to a cis-acting sequence upstream of the target gene promoters including lipase lipA and pmrH promoters. Also autoregulates its own pmrAB operon under Mg(2+)-limiting conditions. This is Response regulator protein PmrA (pmrA) from Pseudomonas aeruginosa (strain ATCC 15692 / DSM 22644 / CIP 104116 / JCM 14847 / LMG 12228 / 1C / PRS 101 / PAO1).